A 287-amino-acid polypeptide reads, in one-letter code: NAD kinase (287 aa).

The active-site Proton acceptor is Asp70. NAD(+) is bound by residues 70–71 (DG), 144–145 (ND), Arg155, Lys172, Asp174, 185–190 (TAYSLS), and Gln244.

This sequence belongs to the NAD kinase family. It depends on a divalent metal cation as a cofactor.

The protein resides in the cytoplasm. The catalysed reaction is NAD(+) + ATP = ADP + NADP(+) + H(+). Its function is as follows. Involved in the regulation of the intracellular balance of NAD and NADP, and is a key enzyme in the biosynthesis of NADP. Catalyzes specifically the phosphorylation on 2'-hydroxyl of the adenosine moiety of NAD to yield NADP. The polypeptide is NAD kinase (Solibacter usitatus (strain Ellin6076)).